Reading from the N-terminus, the 388-residue chain is Succinate--CoA ligase [ADP-forming] subunit beta (388 aa).

Positions 9–244 constitute an ATP-grasp domain; that stretch reads KQLFARYGMP…KSQEDEREAQ (236 aa). Residues K46, 53 to 55, E99, T102, and E107 each bind ATP; that span reads GRG. Mg(2+) contacts are provided by N199 and D213. Residues N264 and 321–323 each bind substrate; that span reads GIV.

The protein belongs to the succinate/malate CoA ligase beta subunit family. Heterotetramer of two alpha and two beta subunits. The cofactor is Mg(2+).

The catalysed reaction is succinate + ATP + CoA = succinyl-CoA + ADP + phosphate. It catalyses the reaction GTP + succinate + CoA = succinyl-CoA + GDP + phosphate. It participates in carbohydrate metabolism; tricarboxylic acid cycle; succinate from succinyl-CoA (ligase route): step 1/1. Succinyl-CoA synthetase functions in the citric acid cycle (TCA), coupling the hydrolysis of succinyl-CoA to the synthesis of either ATP or GTP and thus represents the only step of substrate-level phosphorylation in the TCA. The beta subunit provides nucleotide specificity of the enzyme and binds the substrate succinate, while the binding sites for coenzyme A and phosphate are found in the alpha subunit. This chain is Succinate--CoA ligase [ADP-forming] subunit beta, found in Yersinia enterocolitica serotype O:8 / biotype 1B (strain NCTC 13174 / 8081).